The sequence spans 211 residues: Testis-expressed protein 35 (211 aa).

A coiled-coil region spans residues 47–111 (GGTKELKNEL…MDVLINIQKN (65 aa)).

The sequence is that of Testis-expressed protein 35 (Tex35) from Bos taurus (Bovine).